Reading from the N-terminus, the 49-residue chain is Large ribosomal subunit protein bL33A (49 aa).

It belongs to the bacterial ribosomal protein bL33 family.

This Staphylococcus aureus (strain Mu3 / ATCC 700698) protein is Large ribosomal subunit protein bL33A.